Consider the following 446-residue polypeptide: Probable glycine dehydrogenase (decarboxylating) subunit 1 (446 aa).

It belongs to the GcvP family. N-terminal subunit subfamily. As to quaternary structure, the glycine cleavage system is composed of four proteins: P, T, L and H. In this organism, the P 'protein' is a heterodimer of two subunits.

It catalyses the reaction N(6)-[(R)-lipoyl]-L-lysyl-[glycine-cleavage complex H protein] + glycine + H(+) = N(6)-[(R)-S(8)-aminomethyldihydrolipoyl]-L-lysyl-[glycine-cleavage complex H protein] + CO2. Its function is as follows. The glycine cleavage system catalyzes the degradation of glycine. The P protein binds the alpha-amino group of glycine through its pyridoxal phosphate cofactor; CO(2) is released and the remaining methylamine moiety is then transferred to the lipoamide cofactor of the H protein. The polypeptide is Probable glycine dehydrogenase (decarboxylating) subunit 1 (Desulforamulus reducens (strain ATCC BAA-1160 / DSM 100696 / MI-1) (Desulfotomaculum reducens)).